A 108-amino-acid polypeptide reads, in one-letter code: UPF0060 membrane protein KPK_2870 (108 aa).

The next 4 membrane-spanning stretches (helical) occupy residues 6–26 (LLFFATALCEIIGCYLPWLWL), 29–49 (GATPLLLIPTGLALALFVWLL), 61–81 (AAYGGVYVCTALLWLRVVDGV), and 86–106 (YDWAGAIIALCGMLIIVAGWG).

The protein belongs to the UPF0060 family.

It is found in the cell inner membrane. The protein is UPF0060 membrane protein KPK_2870 of Klebsiella pneumoniae (strain 342).